The primary structure comprises 485 residues: Glutamyl-tRNA(Gln) amidotransferase subunit A (485 aa).

Residues Lys-78 and Ser-153 each act as charge relay system in the active site. Ser-177 acts as the Acyl-ester intermediate in catalysis.

The protein belongs to the amidase family. GatA subfamily. Heterotrimer of A, B and C subunits.

It carries out the reaction L-glutamyl-tRNA(Gln) + L-glutamine + ATP + H2O = L-glutaminyl-tRNA(Gln) + L-glutamate + ADP + phosphate + H(+). Functionally, allows the formation of correctly charged Gln-tRNA(Gln) through the transamidation of misacylated Glu-tRNA(Gln) in organisms which lack glutaminyl-tRNA synthetase. The reaction takes place in the presence of glutamine and ATP through an activated gamma-phospho-Glu-tRNA(Gln). The chain is Glutamyl-tRNA(Gln) amidotransferase subunit A from Geobacter sulfurreducens (strain ATCC 51573 / DSM 12127 / PCA).